Consider the following 299-residue polypeptide: Mycothiol acetyltransferase (299 aa).

N-acetyltransferase domains follow at residues 1–156 (MGWT…TYRG) and 149–299 (VTMR…ARAL). A 1D-myo-inositol 2-(L-cysteinylamino)-2-deoxy-alpha-D-glucopyranoside-binding site is contributed by E33. Acetyl-CoA contacts are provided by residues 75–77 (LVV) and 83–88 (RRGIGT). Residues E176, K218, and E231 each coordinate 1D-myo-inositol 2-(L-cysteinylamino)-2-deoxy-alpha-D-glucopyranoside. Acetyl-CoA contacts are provided by residues 235 to 237 (VGI) and 242 to 248 (QGRGLGR). Position 269 (Y269) interacts with 1D-myo-inositol 2-(L-cysteinylamino)-2-deoxy-alpha-D-glucopyranoside. Position 274-279 (274-279 (NTAALH)) interacts with acetyl-CoA.

This sequence belongs to the acetyltransferase family. MshD subfamily. In terms of assembly, monomer.

It catalyses the reaction 1D-myo-inositol 2-(L-cysteinylamino)-2-deoxy-alpha-D-glucopyranoside + acetyl-CoA = mycothiol + CoA + H(+). Functionally, catalyzes the transfer of acetyl from acetyl-CoA to desacetylmycothiol (Cys-GlcN-Ins) to form mycothiol. The polypeptide is Mycothiol acetyltransferase (Rhodococcus erythropolis (strain PR4 / NBRC 100887)).